The sequence spans 500 residues: Bifunctional protein GlmU (500 aa).

The interval 1–242 is pyrophosphorylase; it reads MPVQTAVVVL…SAKVAGANDR (242 aa). Residues 10–13, Lys-24, Gln-81, and 86–87 contribute to the UDP-N-acetyl-alpha-D-glucosamine site; these read LAAG and GT. Asp-112 contributes to the Mg(2+) binding site. Gly-151, Glu-167, Asn-182, and Asn-240 together coordinate UDP-N-acetyl-alpha-D-glucosamine. Mg(2+) is bound at residue Asn-240. The tract at residues 243–263 is linker; sequence VQLSRLAAELNRRTVENWMRA. The segment at 264-500 is N-acetyltransferase; it reads GVTVVDPSTT…KQDLKDGIEQ (237 aa). The UDP-N-acetyl-alpha-D-glucosamine site is built by Arg-345 and Lys-363. His-375 serves as the catalytic Proton acceptor. Residues Tyr-378 and Asn-389 each contribute to the UDP-N-acetyl-alpha-D-glucosamine site. Residues Ala-392, 398–399, Ser-417, and Ala-435 contribute to the acetyl-CoA site; that span reads NY. Positions 472–500 are disordered; that stretch reads AEAAAAAGLHHSSDLHETEKQDLKDGIEQ. The segment covering 482–500 has biased composition (basic and acidic residues); it reads HSSDLHETEKQDLKDGIEQ.

This sequence in the N-terminal section; belongs to the N-acetylglucosamine-1-phosphate uridyltransferase family. It in the C-terminal section; belongs to the transferase hexapeptide repeat family. Homotrimer. It depends on Mg(2+) as a cofactor.

It localises to the cytoplasm. It carries out the reaction alpha-D-glucosamine 1-phosphate + acetyl-CoA = N-acetyl-alpha-D-glucosamine 1-phosphate + CoA + H(+). The enzyme catalyses N-acetyl-alpha-D-glucosamine 1-phosphate + UTP + H(+) = UDP-N-acetyl-alpha-D-glucosamine + diphosphate. It participates in nucleotide-sugar biosynthesis; UDP-N-acetyl-alpha-D-glucosamine biosynthesis; N-acetyl-alpha-D-glucosamine 1-phosphate from alpha-D-glucosamine 6-phosphate (route II): step 2/2. It functions in the pathway nucleotide-sugar biosynthesis; UDP-N-acetyl-alpha-D-glucosamine biosynthesis; UDP-N-acetyl-alpha-D-glucosamine from N-acetyl-alpha-D-glucosamine 1-phosphate: step 1/1. Its pathway is bacterial outer membrane biogenesis; LPS lipid A biosynthesis. Functionally, catalyzes the last two sequential reactions in the de novo biosynthetic pathway for UDP-N-acetylglucosamine (UDP-GlcNAc). The C-terminal domain catalyzes the transfer of acetyl group from acetyl coenzyme A to glucosamine-1-phosphate (GlcN-1-P) to produce N-acetylglucosamine-1-phosphate (GlcNAc-1-P), which is converted into UDP-GlcNAc by the transfer of uridine 5-monophosphate (from uridine 5-triphosphate), a reaction catalyzed by the N-terminal domain. The protein is Bifunctional protein GlmU of Rhodococcus jostii (strain RHA1).